Reading from the N-terminus, the 460-residue chain is Elongation factor 1-alpha (460 aa).

G2 carries the post-translational modification N,N,N-trimethylglycine. Position 3 is an N6,N6-dimethyllysine; alternate (K3). The residue at position 3 (K3) is an N6-methyllysine; alternate. Residues K5–S240 form the tr-type G domain. Positions G14–S21 are G1. GTP is bound at residue G14–S21. Residue K30 is modified to N6-methyllysine. The tract at residues G70–D74 is G2. N6,N6,N6-trimethyllysine is present on K79. Residues D91–G94 form a G3 region. GTP-binding positions include D91–H95 and N153–D156. Residues N153–D156 form a G4 region. The segment at S192–W194 is G5. K317 is modified (N6,N6-dimethyllysine; alternate). K317 is subject to N6-methyllysine; alternate. The residue at position 391 (K391) is an N6-methyllysine.

Belongs to the TRAFAC class translation factor GTPase superfamily. Classic translation factor GTPase family. EF-Tu/EF-1A subfamily.

Its subcellular location is the cytoplasm. Its function is as follows. This protein promotes the GTP-dependent binding of aminoacyl-tRNA to the A-site of ribosomes during protein biosynthesis. This is Elongation factor 1-alpha (TEF) from Yarrowia lipolytica (strain CLIB 122 / E 150) (Yeast).